The primary structure comprises 444 residues: MSNTILQNLPEGQKVGIAFSGGLDTSAALLWMRQKGAVPYAYTANLGQPDEDDYNAIPKKAMAYGAENARLIDCRTQLAQEGIAAIQCGAFHISTGGVTYFNTTPLGRAVTGTMLVAAMKEDDVNIWGDGSTFKGNDIERFYRYGLLTNPNLKIYKPWLDDQFIDELGGRFEMSQFLIANGFDYKMSVEKAYSTDSNMLGATHEAKDLEDLSTGINIVKPIMGVAFWDESVEIKPEVVTVRFEEGVPVELNGKRFDDVVELFMEANRIGGRHGLGMSDQIENRIIEAKSRGIYEAPGMALFHIAYERLLTGIHNEDTIEQYRINGLRLGRLLYQGRWFDPQALMLRESSQRWVAKAITGEVKLELRRGNDYSILDTVSPNLTYEAERLSMEKVEDAPFDPIDRIGQLTMRNLDVTDTRNKLGVYSKAGLLTAGQDAVVPQLDKK.

ATP contacts are provided by residues 18–26 and Ala44; that span reads AFSGGLDTS. Tyr100 contributes to the L-citrulline binding site. Gly130 and Thr132 together coordinate ATP. Residues Thr132, Asn136, and Asp137 each contribute to the L-aspartate site. Asn136 contributes to the L-citrulline binding site. Position 137 (Asp137) interacts with ATP. Residues Arg140 and Ser193 each contribute to the L-citrulline site. Asp195 is an ATP binding site. Residues Thr202, Glu204, and Glu281 each contribute to the L-citrulline site.

This sequence belongs to the argininosuccinate synthase family. Type 2 subfamily. Homotetramer.

The protein resides in the cytoplasm. The enzyme catalyses L-citrulline + L-aspartate + ATP = 2-(N(omega)-L-arginino)succinate + AMP + diphosphate + H(+). Its pathway is amino-acid biosynthesis; L-arginine biosynthesis; L-arginine from L-ornithine and carbamoyl phosphate: step 2/3. In Actinobacillus succinogenes (strain ATCC 55618 / DSM 22257 / CCUG 43843 / 130Z), this protein is Argininosuccinate synthase.